The following is a 110-amino-acid chain: UPF0213 protein DVU_3309 (110 aa).

One can recognise a GIY-YIG domain in the interval 8-83 (EVWFVYLLRC…KRQPTDQKLA (76 aa)).

It belongs to the UPF0213 family.

The chain is UPF0213 protein DVU_3309 from Nitratidesulfovibrio vulgaris (strain ATCC 29579 / DSM 644 / CCUG 34227 / NCIMB 8303 / VKM B-1760 / Hildenborough) (Desulfovibrio vulgaris).